The chain runs to 313 residues: MANRRKIALIGAGNIGGELAALIARKELGDVVLFDIPQKTDFAKGKALDLEQNGAVLGYDASIKGTSSWADCAGADVLIVTAGIPRKPGQSRDDLVATNLPIIRSVADGAKEHCPNALVIVISNPIDAMVYEFKRRTGFPRERVLGMAGVLDSARFQLFLAREANVSVKDVRAMVLGGHGDDMVPIPSACTINGVRATELISKEKLDALIARTRKGGGEIVQLMGTSAYYAPASSAVAMAESYLLDQKRLLPVAAYLDGEYGYKDIFMGVPVILGGKGIEKIVELPLTAEEKEMLAKSAKSVQGITDVVKASS.

NAD(+) is bound by residues 11-16 and D35; that span reads GAGNIG. Residues R86 and R92 each contribute to the substrate site. Residues N99 and 122-124 each bind NAD(+); that span reads ISN. Substrate contacts are provided by N124 and R155. The Proton acceptor role is filled by H179.

This sequence belongs to the LDH/MDH superfamily. MDH type 3 family.

The enzyme catalyses (S)-malate + NAD(+) = oxaloacetate + NADH + H(+). Catalyzes the reversible oxidation of malate to oxaloacetate. The chain is Malate dehydrogenase from Sorangium cellulosum (strain So ce56) (Polyangium cellulosum (strain So ce56)).